Reading from the N-terminus, the 255-residue chain is MLAKRIIPCLDVTDGRVVKGTNFINLRDAGDPVECARAYDAQQADELVFLDITASSDGRATMADVVRRTAACCFMPLTVGGGIRSVKDMREMLLAGADKVSLNTAAINRPELINEGAVAFGSQCIVVAIDAKRQASGKWGVSTHGGRKFVGLDAVEWAVEAERRGAGEILLTSMDADGAKTGYDIELTRAVSSAVRIPVIASGGAGNLDHMVDVLVEGKADAVLAASIFHFGEYTVPEAKAYFASRGIPVRPLAE.

Residues D11 and D130 contribute to the active site.

Belongs to the HisA/HisF family. In terms of assembly, heterodimer of HisH and HisF.

The protein localises to the cytoplasm. It catalyses the reaction 5-[(5-phospho-1-deoxy-D-ribulos-1-ylimino)methylamino]-1-(5-phospho-beta-D-ribosyl)imidazole-4-carboxamide + L-glutamine = D-erythro-1-(imidazol-4-yl)glycerol 3-phosphate + 5-amino-1-(5-phospho-beta-D-ribosyl)imidazole-4-carboxamide + L-glutamate + H(+). It participates in amino-acid biosynthesis; L-histidine biosynthesis; L-histidine from 5-phospho-alpha-D-ribose 1-diphosphate: step 5/9. Functionally, IGPS catalyzes the conversion of PRFAR and glutamine to IGP, AICAR and glutamate. The HisF subunit catalyzes the cyclization activity that produces IGP and AICAR from PRFAR using the ammonia provided by the HisH subunit. In Akkermansia muciniphila (strain ATCC BAA-835 / DSM 22959 / JCM 33894 / BCRC 81048 / CCUG 64013 / CIP 107961 / Muc), this protein is Imidazole glycerol phosphate synthase subunit HisF.